The following is a 450-amino-acid chain: Phosphoglucosamine mutase (450 aa).

The active-site Phosphoserine intermediate is Ser-102. The Mg(2+) site is built by Ser-102, Asp-244, Asp-246, and Asp-248. Ser-102 bears the Phosphoserine mark.

The protein belongs to the phosphohexose mutase family. Mg(2+) is required as a cofactor. Post-translationally, activated by phosphorylation.

The enzyme catalyses alpha-D-glucosamine 1-phosphate = D-glucosamine 6-phosphate. Its function is as follows. Catalyzes the conversion of glucosamine-6-phosphate to glucosamine-1-phosphate. This chain is Phosphoglucosamine mutase, found in Nitratidesulfovibrio vulgaris (strain ATCC 29579 / DSM 644 / CCUG 34227 / NCIMB 8303 / VKM B-1760 / Hildenborough) (Desulfovibrio vulgaris).